A 567-amino-acid polypeptide reads, in one-letter code: Laccase-7 (567 aa).

The N-terminal stretch at M1–A23 is a signal peptide. 2 consecutive Plastocyanin-like domains span residues N31–G147 and K157–A310. 3 N-linked (GlcNAc...) asparagine glycosylation sites follow: N34, N50, and N77. Positions 81 and 83 each coordinate Cu cation. N115 carries an N-linked (GlcNAc...) asparagine glycan. Positions 126 and 128 each coordinate Cu cation. 7 N-linked (GlcNAc...) asparagine glycosylation sites follow: N186, N298, N339, N374, N386, N427, and N450. One can recognise a Plastocyanin-like 3 domain in the interval D412–P551. 7 residues coordinate Cu cation: H468, H471, H473, H530, C531, H532, and H536.

Belongs to the multicopper oxidase family. Requires Cu cation as cofactor. As to expression, predominantly expressed in tissues other than the inflorescence stem.

The protein localises to the secreted. The protein resides in the extracellular space. It is found in the apoplast. The catalysed reaction is 4 hydroquinone + O2 = 4 benzosemiquinone + 2 H2O. Functionally, lignin degradation and detoxification of lignin-derived products. This chain is Laccase-7 (LAC7), found in Arabidopsis thaliana (Mouse-ear cress).